A 393-amino-acid chain; its full sequence is 4-hydroxyphenylpyruvate dioxygenase (393 aa).

An N-acetylthreonine modification is found at threonine 2. 2 consecutive VOC domains span residues 18-149 (HFHS…LVEK) and 180-338 (MIDH…IFTK). At lysine 132 the chain carries N6-succinyllysine. Histidine 183 serves as a coordination point for Fe cation. 3 positions are modified to phosphoserine: serine 211, serine 226, and serine 250. 2 residues coordinate Fe cation: histidine 266 and glutamate 349.

This sequence belongs to the 4HPPD family. In terms of assembly, homodimer. Fe cation is required as a cofactor.

It localises to the cytoplasm. It is found in the endoplasmic reticulum membrane. The protein resides in the golgi apparatus membrane. The catalysed reaction is 3-(4-hydroxyphenyl)pyruvate + O2 = homogentisate + CO2. It participates in amino-acid degradation; L-phenylalanine degradation; acetoacetate and fumarate from L-phenylalanine: step 3/6. Functionally, catalyzes the conversion of 4-hydroxyphenylpyruvic acid to homogentisic acid, one of the steps in tyrosine catabolism. The protein is 4-hydroxyphenylpyruvate dioxygenase (HPD) of Homo sapiens (Human).